A 271-amino-acid polypeptide reads, in one-letter code: MTYLQEASRNAITVPKLQAMRDAGEKIAMLTCYDASFAALLDRAGVDVLLIGDSLGNVLQGQTTTLPVSLADIAYHTASVARARPAALIVADLPFGTYGTPEDAFRSSVELMRAGAQMVKLEGGEWLADTVRFLVERSIPVCAHVGLTPQSVHAFGGFKVQGKTEAGATQLMRDSLAVQQAGAQLIVMEAIPTLLASDVTKQLRIPTIGIGAGLDCSGQVLVLHDMLGIFPGKRPRFVKDFMHGQPSILAAVEAYVAAVKDGSFPGPEHTF.

Residues Asp-53 and Asp-92 each contribute to the Mg(2+) site. 3-methyl-2-oxobutanoate contacts are provided by residues 53–54, Asp-92, and Lys-120; that span reads DS. Glu-122 is a Mg(2+) binding site. The active-site Proton acceptor is the Glu-189.

The protein belongs to the PanB family. In terms of assembly, homodecamer; pentamer of dimers. Mg(2+) serves as cofactor.

It localises to the cytoplasm. The enzyme catalyses 3-methyl-2-oxobutanoate + (6R)-5,10-methylene-5,6,7,8-tetrahydrofolate + H2O = 2-dehydropantoate + (6S)-5,6,7,8-tetrahydrofolate. It functions in the pathway cofactor biosynthesis; (R)-pantothenate biosynthesis; (R)-pantoate from 3-methyl-2-oxobutanoate: step 1/2. Functionally, catalyzes the reversible reaction in which hydroxymethyl group from 5,10-methylenetetrahydrofolate is transferred onto alpha-ketoisovalerate to form ketopantoate. This chain is 3-methyl-2-oxobutanoate hydroxymethyltransferase, found in Paraburkholderia phytofirmans (strain DSM 17436 / LMG 22146 / PsJN) (Burkholderia phytofirmans).